The sequence spans 694 residues: Elongation factor G (694 aa).

The tr-type G domain occupies 8–282 (DRLRNIGIMA…AIVDYLPSPL (275 aa)). GTP is bound by residues 17 to 24 (AHIDAGKT), 81 to 85 (DTPGH), and 135 to 138 (NKMD). A disordered region spans residues 284–303 (IPPVQGTDPETGEPAERKAD).

It belongs to the TRAFAC class translation factor GTPase superfamily. Classic translation factor GTPase family. EF-G/EF-2 subfamily.

The protein resides in the cytoplasm. Its function is as follows. Catalyzes the GTP-dependent ribosomal translocation step during translation elongation. During this step, the ribosome changes from the pre-translocational (PRE) to the post-translocational (POST) state as the newly formed A-site-bound peptidyl-tRNA and P-site-bound deacylated tRNA move to the P and E sites, respectively. Catalyzes the coordinated movement of the two tRNA molecules, the mRNA and conformational changes in the ribosome. This Symbiobacterium thermophilum (strain DSM 24528 / JCM 14929 / IAM 14863 / T) protein is Elongation factor G.